The chain runs to 621 residues: Chaperone protein HtpG (621 aa).

The a; substrate-binding stretch occupies residues 1–328 (MTQEKKKFDA…SEDLPLNISR (328 aa)). Residues 329 to 544 (ESLQHNNVLE…DTAMDIRMER (216 aa)) form a b region. The tract at residues 545–621 (FLIEQKQIAN…LNDILQKAIL (77 aa)) is c.

Belongs to the heat shock protein 90 family. As to quaternary structure, homodimer.

It is found in the cytoplasm. Molecular chaperone. Has ATPase activity. This Rickettsia prowazekii (strain Madrid E) protein is Chaperone protein HtpG.